A 262-amino-acid polypeptide reads, in one-letter code: Acyl-[acyl-carrier-protein]--UDP-N-acetylglucosamine O-acyltransferase (262 aa).

It belongs to the transferase hexapeptide repeat family. LpxA subfamily. As to quaternary structure, homotrimer.

It is found in the cytoplasm. It catalyses the reaction a (3R)-hydroxyacyl-[ACP] + UDP-N-acetyl-alpha-D-glucosamine = a UDP-3-O-[(3R)-3-hydroxyacyl]-N-acetyl-alpha-D-glucosamine + holo-[ACP]. It participates in glycolipid biosynthesis; lipid IV(A) biosynthesis; lipid IV(A) from (3R)-3-hydroxytetradecanoyl-[acyl-carrier-protein] and UDP-N-acetyl-alpha-D-glucosamine: step 1/6. In terms of biological role, involved in the biosynthesis of lipid A, a phosphorylated glycolipid that anchors the lipopolysaccharide to the outer membrane of the cell. In Cronobacter sakazakii (strain ATCC BAA-894) (Enterobacter sakazakii), this protein is Acyl-[acyl-carrier-protein]--UDP-N-acetylglucosamine O-acyltransferase.